We begin with the raw amino-acid sequence, 372 residues long: MALKFHVLHQSKKSRARVGRIETAHGIIDTPAFVPVATNGALKGVVDHSNIQLMFCNTYHLLVHPGTEAIAAMGGLHKFIHRNSPIITDSGGFQIFSLAYGSVAEEIKSCGKKKGSSSILEVTDEGVWFKSYRDGSKLFLSPEVSVQAQKDLGADIIIPLDELLPFHSDTTYFLSSCARTYVWEKRSLDYHKKDPRHQSMYGVIHGGIDPKQRKIGCAFVEDHPFDGFAIGGSLGRNLNEMVPIVDITTSYLSKDRPVHLLGIGDLPSIQATIGFGIDSFDSSYPTKAARHGLILSSQGPIKIANQAYTNDLSPIDPECTCLTCTSKISRAYLRHLFKVHEPNASIWASIHNLHYMQEFMKNIREQILHDRI.

The Proton acceptor role is filled by aspartate 89. Substrate contacts are provided by residues 89-93 (DSGGF), aspartate 161, and glycine 232. Positions 262–268 (GIGDLPS) are RNA binding. Catalysis depends on aspartate 281, which acts as the Nucleophile. The segment at 286-290 (TKAAR) is RNA binding; important for wobble base 34 recognition. Cysteine 319, cysteine 321, cysteine 324, and histidine 351 together coordinate Zn(2+).

This sequence belongs to the queuine tRNA-ribosyltransferase family. In terms of assembly, homodimer. Within each dimer, one monomer is responsible for RNA recognition and catalysis, while the other monomer binds to the replacement base PreQ1. Zn(2+) serves as cofactor.

It catalyses the reaction 7-aminomethyl-7-carbaguanine + guanosine(34) in tRNA = 7-aminomethyl-7-carbaguanosine(34) in tRNA + guanine. It participates in tRNA modification; tRNA-queuosine biosynthesis. Functionally, catalyzes the base-exchange of a guanine (G) residue with the queuine precursor 7-aminomethyl-7-deazaguanine (PreQ1) at position 34 (anticodon wobble position) in tRNAs with GU(N) anticodons (tRNA-Asp, -Asn, -His and -Tyr). Catalysis occurs through a double-displacement mechanism. The nucleophile active site attacks the C1' of nucleotide 34 to detach the guanine base from the RNA, forming a covalent enzyme-RNA intermediate. The proton acceptor active site deprotonates the incoming PreQ1, allowing a nucleophilic attack on the C1' of the ribose to form the product. After dissociation, two additional enzymatic reactions on the tRNA convert PreQ1 to queuine (Q), resulting in the hypermodified nucleoside queuosine (7-(((4,5-cis-dihydroxy-2-cyclopenten-1-yl)amino)methyl)-7-deazaguanosine). The sequence is that of Queuine tRNA-ribosyltransferase from Chlamydia abortus (strain DSM 27085 / S26/3) (Chlamydophila abortus).